A 366-amino-acid polypeptide reads, in one-letter code: Terpene cyclase-like protein flvF (366 aa).

It belongs to the terpene synthase family. Homodimer.

It catalyses the reaction N,N-dimethyl-cadaverine + 2,6,9-trimethyl-13-oxatetracyclo[6.3.1.1(6,9).0(1,5)]tridecane carbocation = pre-flavunoidine + H(+). It participates in secondary metabolite biosynthesis; terpenoid biosynthesis. In terms of biological role, terpene cyclase-like protein; part of the gene cluster that mediates the biosynthesis of flavunoidine, an alkaloidal terpenoid with a tetracyclic cage-like core connected to dimethylcadaverine via a C-N bond and acylated with 5,5-dimethyl-L-pipecolate. The tetracyclic core is synthesized by the terpene cyclase flvE and the cytochrome P450 monooxygenase flvD. The terpene cyclase flvE catalyzes the cyclization of farnesyl pyrophosphate (FPP) to form (1R,4R,5S)-(+)-acoradiene and the cytochrome P450 monooxygenase flvD is then responsible for oxidative conversion of (1R,4R,5S)-(+)-acoradiene into the tetracyclic cage present in the final product flavunoidine. In parallel, the N-methyltransferase flvH dimethylates L-lysine to give N,N-dimethyl-L-Lysin which is decarboxylated by flvG to afford dimethylcadaverine. The terpene cyclase-like protein flvF is the enzyme that attaches the dimethylcadaverine precusor at the C-7 of the tetracyclic cage to yield pre-flavunoidine. The cytochrome monooxygenase flvC hydroxylates the C-10 position of pre-flavunoidine whereas the NRPS flvI acylates the terpenoid core at the hydroxylated C-10 with dimethylpipecolate to yield final flavunoidine. The bifunctional enzyme flvA and the dehydrogenase flvB are responsible for the synthesis of the dimethylpipecolate precursor. The PLP-dependent lyase domain of flvA might use L-O-acetyl-homoserine and alpha-keto-isovalerate to form an intermediary ketone that can cyclize intramolecularly to yield an imine. The imine can be reduced by flvB to yield the 6-carboxylated pipecolate. The C-terminal alpha-KG-dependent oxygenase domain of flvA is then proposed to catalyze the decarboxylation to yield dimethylpipecolate. This is Terpene cyclase-like protein flvF from Aspergillus flavus (strain ATCC 200026 / FGSC A1120 / IAM 13836 / NRRL 3357 / JCM 12722 / SRRC 167).